Consider the following 309-residue polypeptide: Mitochondrial phosphate carrier protein 1, mitochondrial (309 aa).

Residues 1 to 15 (MTRVKSKLDEELSSP) lie on the Mitochondrial intermembrane side of the membrane. Residues 16 to 36 (WFYTVCTMGGMLSAGTTHLAI) traverse the membrane as a helical segment. 3 Solcar repeats span residues 16 to 100 (WFYT…FKTL), 109 to 193 (NRTS…SVEF), and 210 to 289 (QQLG…IKVL). Over 37–74 (TPLDVLKVNMQVNPVKYNSIPSGFSTLLREHGHSYLWR) the chain is Mitochondrial matrix. Residues 75 to 94 (GWSGKLLGYGVQGGCRFGLY) traverse the membrane as a helical segment. The Mitochondrial intermembrane segment spans residues 95-111 (EYFKTLYSDVLPNHNRT). A helical membrane pass occupies residues 112–132 (SIYFLSSASAQIFADMALCPF). At 133-167 (EAIKVRVQTQPMFAKGLLDGFPRVYRSEGLAGFHR) the chain is on the mitochondrial matrix side. Residues 168 to 187 (GLFPLWCRNLPFSMVMFSTF) form a helical membrane-spanning segment. Residues 188 to 208 (EQSVEFIYQKIIQKRKQDCSK) are Mitochondrial intermembrane-facing. The chain crosses the membrane as a helical span at residues 209–229 (AQQLGVTCLAGYTAGAVGTII). The Mitochondrial matrix portion of the chain corresponds to 230-268 (SNPADVVLSSLYNNKAKNVLQAVRNIGFVGLFTRSLPVR). A helical transmembrane segment spans residues 269–289 (ITIVGPVITLQWFFYDAIKVL). Residues 290–309 (SGFPTSGGVKKPVDAAKLSV) lie on the Mitochondrial intermembrane side of the membrane.

The protein belongs to the mitochondrial carrier (TC 2.A.29) family. In terms of tissue distribution, expressed in stems, leaves and flowers. Strong expression in the stamens of flowers.

Its subcellular location is the mitochondrion inner membrane. Functionally, transport of phosphate groups from the cytosol to the mitochondrial matrix. Mediates salt stress tolerance through an ATP-dependent pathway and via modulation of the gibberellin metabolism. This chain is Mitochondrial phosphate carrier protein 1, mitochondrial (MPT1), found in Arabidopsis thaliana (Mouse-ear cress).